The primary structure comprises 283 residues: Small aggregate formation protein (283 aa).

It localises to the cytoplasm. Functionally, knockout of the gene for this protein causes small aggregate formation. May regulate the secretion or processing of a secreted factor that regulates aggregate size. This chain is Small aggregate formation protein (smlA), found in Dictyostelium discoideum (Social amoeba).